The primary structure comprises 126 residues: Protein ApaG (126 aa).

Residues 2–126 (SDPRYQVDVS…FRLAVPGALH (125 aa)) form the ApaG domain.

This is Protein ApaG from Pseudomonas fluorescens (strain Pf0-1).